The chain runs to 333 residues: Glutamyl endopeptidase (333 aa).

The N-terminal stretch at 1–29 is a signal peptide; that stretch reads MKGKFLKVSSLFVATLTTATLVSSPAANA. A propeptide spanning residues 30 to 68 is cleaved from the precursor; that stretch reads LSSKAMDNHPQQSQSSKQQTPKIQKGGNLKPLEQREHAN. Residues 33-61 are disordered; sequence KAMDNHPQQSQSSKQQTPKIQKGGNLKPL. Over residues 40-54 the composition is skewed to low complexity; the sequence is QQSQSSKQQTPKIQK. Active-site charge relay system residues include His119, Asp161, and Ser237. The interval 283 to 333 is disordered; the sequence is FANDDQPNNPDNPDNPNNPDNPNNPDNPNNPNNPDNPDNGDNNNSDNPDAA. Low complexity predominate over residues 286–333; sequence DDQPNNPDNPDNPNNPDNPNNPDNPNNPNNPDNPDNGDNNNSDNPDAA. 11 repeat units span residues 289-291, 292-294, 295-297, 298-300, 301-303, 304-306, 307-309, 310-312, 313-315, 316-318, and 319-321. The interval 289–321 is 11 X 3 AA repeats of P-[DN]-N; sequence PNNPDNPDNPNNPDNPNNPDNPNNPNNPDNPDN.

The protein belongs to the peptidase S1B family. Post-translationally, proteolytically cleaved by aureolysin (aur). This cleavage leads to the activation of SspA.

The protein localises to the secreted. The enzyme catalyses Preferential cleavage: Glu-|-Xaa, Asp-|-Xaa.. In terms of biological role, preferentially cleaves peptide bonds on the carboxyl-terminal side of aspartate and glutamate. Along with other extracellular proteases it is involved in colonization and infection of human tissues. Required for proteolytic maturation of thiol protease SspB and inactivation of SspC, an inhibitor of SspB. It is the most important protease for degradation of fibronectin-binding protein (FnBP) and surface protein A, which are involved in adherence to host cells. May also protect bacteria against host defense mechanism by cleaving the immunoglobulin classes IgG, IgA and IgM. May be involved in the stability of secreted lipases. This chain is Glutamyl endopeptidase (sspA), found in Staphylococcus aureus (strain MSSA476).